Reading from the N-terminus, the 548-residue chain is Probable malate:quinone oxidoreductase (548 aa).

This sequence belongs to the MQO family. It depends on FAD as a cofactor.

It catalyses the reaction (S)-malate + a quinone = a quinol + oxaloacetate. It participates in carbohydrate metabolism; tricarboxylic acid cycle; oxaloacetate from (S)-malate (quinone route): step 1/1. This is Probable malate:quinone oxidoreductase from Escherichia coli (strain SE11).